A 322-amino-acid polypeptide reads, in one-letter code: 4-hydroxy-3-methylbut-2-enyl diphosphate reductase (322 aa).

Cysteine 15 provides a ligand contact to [4Fe-4S] cluster. Residues histidine 44 and histidine 77 each coordinate (2E)-4-hydroxy-3-methylbut-2-enyl diphosphate. 2 residues coordinate dimethylallyl diphosphate: histidine 44 and histidine 77. Histidine 44 and histidine 77 together coordinate isopentenyl diphosphate. Position 99 (cysteine 99) interacts with [4Fe-4S] cluster. Position 127 (histidine 127) interacts with (2E)-4-hydroxy-3-methylbut-2-enyl diphosphate. Histidine 127 is a binding site for dimethylallyl diphosphate. Histidine 127 lines the isopentenyl diphosphate pocket. Glutamate 129 serves as the catalytic Proton donor. Threonine 168 lines the (2E)-4-hydroxy-3-methylbut-2-enyl diphosphate pocket. A [4Fe-4S] cluster-binding site is contributed by cysteine 198. Residues serine 226, serine 227, asparagine 228, and serine 270 each contribute to the (2E)-4-hydroxy-3-methylbut-2-enyl diphosphate site. Residues serine 226, serine 227, asparagine 228, and serine 270 each contribute to the dimethylallyl diphosphate site. Residues serine 226, serine 227, asparagine 228, and serine 270 each contribute to the isopentenyl diphosphate site.

Belongs to the IspH family. It depends on [4Fe-4S] cluster as a cofactor.

It catalyses the reaction isopentenyl diphosphate + 2 oxidized [2Fe-2S]-[ferredoxin] + H2O = (2E)-4-hydroxy-3-methylbut-2-enyl diphosphate + 2 reduced [2Fe-2S]-[ferredoxin] + 2 H(+). The catalysed reaction is dimethylallyl diphosphate + 2 oxidized [2Fe-2S]-[ferredoxin] + H2O = (2E)-4-hydroxy-3-methylbut-2-enyl diphosphate + 2 reduced [2Fe-2S]-[ferredoxin] + 2 H(+). Its pathway is isoprenoid biosynthesis; dimethylallyl diphosphate biosynthesis; dimethylallyl diphosphate from (2E)-4-hydroxy-3-methylbutenyl diphosphate: step 1/1. It functions in the pathway isoprenoid biosynthesis; isopentenyl diphosphate biosynthesis via DXP pathway; isopentenyl diphosphate from 1-deoxy-D-xylulose 5-phosphate: step 6/6. Its function is as follows. Catalyzes the conversion of 1-hydroxy-2-methyl-2-(E)-butenyl 4-diphosphate (HMBPP) into a mixture of isopentenyl diphosphate (IPP) and dimethylallyl diphosphate (DMAPP). Acts in the terminal step of the DOXP/MEP pathway for isoprenoid precursor biosynthesis. This Neisseria gonorrhoeae (strain ATCC 700825 / FA 1090) protein is 4-hydroxy-3-methylbut-2-enyl diphosphate reductase.